A 248-amino-acid polypeptide reads, in one-letter code: Acyl-coenzyme A thioesterase THEM5 (248 aa).

Asp-167 serves as the catalytic Proton donor/acceptor.

This sequence belongs to the THEM4/THEM5 thioesterase family. As to quaternary structure, homodimer.

It localises to the mitochondrion matrix. It catalyses the reaction hexadecanoyl-CoA + H2O = hexadecanoate + CoA + H(+). The catalysed reaction is (9Z,12Z)-octadecadienoyl-CoA + H2O = (9Z,12Z)-octadecadienoate + CoA + H(+). It carries out the reaction tetradecanoyl-CoA + H2O = tetradecanoate + CoA + H(+). The enzyme catalyses (9Z)-octadecenoyl-CoA + H2O = (9Z)-octadecenoate + CoA + H(+). It catalyses the reaction (9Z)-hexadecenoyl-CoA + H2O = (9Z)-hexadecenoate + CoA + H(+). The catalysed reaction is (5Z,8Z,11Z,14Z)-eicosatetraenoyl-CoA + H2O = (5Z,8Z,11Z,14Z)-eicosatetraenoate + CoA + H(+). It carries out the reaction octadecanoyl-CoA + H2O = octadecanoate + CoA + H(+). Has acyl-CoA thioesterase activity towards long-chain (C16 and C18) fatty acyl-CoA substrates, with a preference for linoleoyl-CoA and other unsaturated long-chain fatty acid-CoA esters. Plays an important role in mitochondrial fatty acid metabolism, and in remodeling of the mitochondrial lipid cardiolipin. Required for normal mitochondrial function. This Mus musculus (Mouse) protein is Acyl-coenzyme A thioesterase THEM5 (Them5).